The following is a 585-amino-acid chain: Adenine deaminase (585 aa).

It belongs to the metallo-dependent hydrolases superfamily. Adenine deaminase family. Requires Mn(2+) as cofactor.

The enzyme catalyses adenine + H2O + H(+) = hypoxanthine + NH4(+). This Halalkalibacterium halodurans (strain ATCC BAA-125 / DSM 18197 / FERM 7344 / JCM 9153 / C-125) (Bacillus halodurans) protein is Adenine deaminase.